The primary structure comprises 1207 residues: DNA-directed RNA polymerase subunit beta' (1207 aa).

The Zn(2+) site is built by C60, C62, C75, and C78. Residues D449, D451, and D453 each contribute to the Mg(2+) site. Zn(2+)-binding residues include C822, C896, C903, and C906.

The protein belongs to the RNA polymerase beta' chain family. As to quaternary structure, the RNAP catalytic core consists of 2 alpha, 1 beta, 1 beta' and 1 omega subunit. When a sigma factor is associated with the core the holoenzyme is formed, which can initiate transcription. Mg(2+) is required as a cofactor. Zn(2+) serves as cofactor.

The enzyme catalyses RNA(n) + a ribonucleoside 5'-triphosphate = RNA(n+1) + diphosphate. Its function is as follows. DNA-dependent RNA polymerase catalyzes the transcription of DNA into RNA using the four ribonucleoside triphosphates as substrates. The protein is DNA-directed RNA polymerase subunit beta' of Staphylococcus saprophyticus subsp. saprophyticus (strain ATCC 15305 / DSM 20229 / NCIMB 8711 / NCTC 7292 / S-41).